The chain runs to 988 residues: Transposase for transposon Tn1546 (988 aa).

It belongs to the transposase 7 family.

Required for transposition of transposon Tn1546. This Enterococcus faecium (Streptococcus faecium) protein is Transposase for transposon Tn1546.